The chain runs to 327 residues: Dipeptide transport ATP-binding protein DppD (327 aa).

The ABC transporter domain maps to 4 to 254 (LNVDKLSVHF…PRHPYTQALL (251 aa)). 40-47 (GESGSGKS) provides a ligand contact to ATP.

It belongs to the ABC transporter superfamily. The complex is composed of two ATP-binding proteins (DppD and DppF), two transmembrane proteins (DppB and DppC) and a solute-binding protein (DppA). MppA can replace DppA as binding protein for heme and ALA transport.

Its subcellular location is the cell inner membrane. The catalysed reaction is a dipeptide(out) + ATP + H2O = a dipeptide(in) + ADP + phosphate + H(+). Part of the ABC transporter DppABCDF involved in dipeptide transport. Responsible for energy coupling to the transport system. In terms of biological role, when a foreign outer membrane heme receptor is expressed in E.coli, DppABCDF can also transport heme and its precursor, 5-aminolevulinic acid (ALA), from the periplasm into the cytoplasm. This is Dipeptide transport ATP-binding protein DppD (dppD) from Escherichia coli (strain K12).